The sequence spans 349 residues: Isopentenyl-diphosphate delta-isomerase (349 aa).

8-9 (RK) is a binding site for substrate. FMN is bound by residues Ser66, 67-69 (SMT), Ser97, and Asn125. 97-99 (STR) is a substrate binding site. Gln160 is a substrate binding site. Glu161 provides a ligand contact to Mg(2+). Residues Lys192, Thr222, 272-274 (GMK), and 293-294 (AR) each bind FMN.

It belongs to the IPP isomerase type 2 family. As to quaternary structure, homooctamer. Dimer of tetramers. Requires FMN as cofactor. NADPH serves as cofactor. It depends on Mg(2+) as a cofactor.

The protein resides in the cytoplasm. It carries out the reaction isopentenyl diphosphate = dimethylallyl diphosphate. Its function is as follows. Involved in the biosynthesis of isoprenoids. Catalyzes the 1,3-allylic rearrangement of the homoallylic substrate isopentenyl (IPP) to its allylic isomer, dimethylallyl diphosphate (DMAPP). This is Isopentenyl-diphosphate delta-isomerase from Oceanobacillus iheyensis (strain DSM 14371 / CIP 107618 / JCM 11309 / KCTC 3954 / HTE831).